The chain runs to 71 residues: DNA-directed RNA polymerase subunit epsilon (71 aa).

Belongs to the RNA polymerase subunit epsilon family. In terms of assembly, RNAP is composed of a core of 2 alpha, a beta and a beta' subunit. The core is associated with a delta subunit, and at least one of epsilon or omega. When a sigma factor is associated with the core the holoenzyme is formed, which can initiate transcription.

The catalysed reaction is RNA(n) + a ribonucleoside 5'-triphosphate = RNA(n+1) + diphosphate. A non-essential component of RNA polymerase (RNAP). This is DNA-directed RNA polymerase subunit epsilon from Staphylococcus carnosus (strain TM300).